The sequence spans 1405 residues: DNA-directed RNA polymerase subunit beta' (1405 aa).

Cysteine 70, cysteine 72, cysteine 85, and cysteine 88 together coordinate Zn(2+). Aspartate 460, aspartate 462, and aspartate 464 together coordinate Mg(2+). Cysteine 814, cysteine 888, cysteine 895, and cysteine 898 together coordinate Zn(2+).

Belongs to the RNA polymerase beta' chain family. In terms of assembly, the RNAP catalytic core consists of 2 alpha, 1 beta, 1 beta' and 1 omega subunit. When a sigma factor is associated with the core the holoenzyme is formed, which can initiate transcription. Requires Mg(2+) as cofactor. Zn(2+) serves as cofactor.

It carries out the reaction RNA(n) + a ribonucleoside 5'-triphosphate = RNA(n+1) + diphosphate. In terms of biological role, DNA-dependent RNA polymerase catalyzes the transcription of DNA into RNA using the four ribonucleoside triphosphates as substrates. This Shewanella oneidensis (strain ATCC 700550 / JCM 31522 / CIP 106686 / LMG 19005 / NCIMB 14063 / MR-1) protein is DNA-directed RNA polymerase subunit beta'.